A 114-amino-acid polypeptide reads, in one-letter code: MNLIESINAAQLRTDIPDFRPGDTVRVHAKVVEGTRERIQMFEGVVIARKNSGINETYTVRKISNGVGVERIFPVHTPRVEQIEVIRHGKVRRAKLYYLRALTGKKARIAERRR.

The protein belongs to the bacterial ribosomal protein bL19 family.

Its function is as follows. This protein is located at the 30S-50S ribosomal subunit interface and may play a role in the structure and function of the aminoacyl-tRNA binding site. This chain is Large ribosomal subunit protein bL19, found in Lactococcus lactis subsp. lactis (strain IL1403) (Streptococcus lactis).